The following is a 62-amino-acid chain: MSIFESICKLRKINTKNQSNSIISKSQMNEILFEGNKKSNNGRIEVVTWGRGNVDYGSVYRD.

This is an uncharacterized protein from Dictyostelium discoideum (Social amoeba).